The following is a 257-amino-acid chain: Type III pantothenate kinase (257 aa).

Asp-6 to Val-13 contributes to the ATP binding site. Gly-107–Arg-110 contacts substrate. Residue Asp-109 is the Proton acceptor of the active site. Asp-129 contributes to the K(+) binding site. Thr-132 contacts ATP. Thr-184 contacts substrate.

It belongs to the type III pantothenate kinase family. Homodimer. Requires NH4(+) as cofactor. K(+) serves as cofactor.

The protein localises to the cytoplasm. The enzyme catalyses (R)-pantothenate + ATP = (R)-4'-phosphopantothenate + ADP + H(+). It functions in the pathway cofactor biosynthesis; coenzyme A biosynthesis; CoA from (R)-pantothenate: step 1/5. In terms of biological role, catalyzes the phosphorylation of pantothenate (Pan), the first step in CoA biosynthesis. The protein is Type III pantothenate kinase of Cereibacter sphaeroides (strain ATCC 17029 / ATH 2.4.9) (Rhodobacter sphaeroides).